The chain runs to 764 residues: 5-methyltetrahydropteroyltriglutamate--homocysteine methyltransferase (764 aa).

5-methyltetrahydropteroyltri-L-glutamate-binding positions include 16 to 19 (RELK) and lysine 117. Residues 442-444 (IGS) and glutamate 495 each bind L-homocysteine. Residues 442–444 (IGS) and glutamate 495 contribute to the L-methionine site. 5-methyltetrahydropteroyltri-L-glutamate-binding positions include 526-527 (RC) and tryptophan 572. Aspartate 610 lines the L-homocysteine pocket. Residue aspartate 610 participates in L-methionine binding. Glutamate 616 provides a ligand contact to 5-methyltetrahydropteroyltri-L-glutamate. Residues histidine 652, cysteine 654, and glutamate 676 each coordinate Zn(2+). Histidine 705 (proton donor) is an active-site residue. Cysteine 737 contributes to the Zn(2+) binding site.

This sequence belongs to the vitamin-B12 independent methionine synthase family. The cofactor is Zn(2+).

It carries out the reaction 5-methyltetrahydropteroyltri-L-glutamate + L-homocysteine = tetrahydropteroyltri-L-glutamate + L-methionine. The protein operates within amino-acid biosynthesis; L-methionine biosynthesis via de novo pathway; L-methionine from L-homocysteine (MetE route): step 1/1. Functionally, catalyzes the transfer of a methyl group from 5-methyltetrahydrofolate to homocysteine resulting in methionine formation. In Bordetella bronchiseptica (strain ATCC BAA-588 / NCTC 13252 / RB50) (Alcaligenes bronchisepticus), this protein is 5-methyltetrahydropteroyltriglutamate--homocysteine methyltransferase.